The chain runs to 570 residues: Serine/threonine-protein kinase Pink1, mitochondrial (570 aa).

The N-terminal 5 residues, 1–5, are a transit peptide targeting the mitochondrion; the sequence is MSVRA. The Mitochondrial intermembrane segment spans residues 6–96; that stretch reads VGSRLFKHGR…AELRKKATRR (91 aa). A helical membrane pass occupies residues 97–120; the sequence is ILFGDSAPFFALVGVSIASGTGIL. Residues 121-570 lie on the Cytoplasmic side of the membrane; sequence TKEEELEGVC…WIQENLPELD (450 aa). In terms of domain architecture, Protein kinase spans 162-484; sequence LSLGKPIAKG…VAANVCQLFL (323 aa). Lys-196 is a binding site for ATP. Position 205 is a phosphoserine; by autocatalysis (Ser-205). Glu-217 is a Mg(2+) binding site. Residues Lys-295, Tyr-297, and Asn-300 each contribute to the ATP site. Asp-337 functions as the Proton acceptor in the catalytic mechanism. Asp-341 contributes to the ATP binding site. Mg(2+) is bound by residues Asn-342 and Asp-359. Position 359 (Asp-359) interacts with ATP. Position 377 is a phosphoserine; by autocatalysis (Ser-377). Thr-386 is modified (phosphothreonine; by autocatalysis). A Phosphothreonine modification is found at Thr-530.

Belongs to the protein kinase superfamily. Ser/Thr protein kinase family. It depends on Mg(2+) as a cofactor. Post-translationally, proteolytically cleaved. In healthy cells, the precursor is continuously imported into mitochondria where it is proteolytically cleaved into its short form by the mitochondrial rhomboid protease rho-7 (TcasGA2_TC013516). The short form is then released into the cytosol where it rapidly undergoes proteasome-dependent degradation. In unhealthy cells, when cellular stress conditions lead to the loss of mitochondrial membrane potential, mitochondrial import is impaired leading to the precursor accumulating on the outer mitochondrial membrane (OMM). Autophosphorylated on Ser-205, which activates kinase activity and is required for substrate recognition. Loss of mitochondrial membrane potential results in the precursor accumulating on the outer mitochondrial membrane (OMM) where it is activated by autophosphorylation at Ser-205. Autophosphorylation is sufficient and essential for selective recruitment of park to depolarized mitochondria, likely via Pink1-dependent phosphorylation of polyubiquitin chains. Also autophosphorylated at Ser-377, Thr-386 and possibly Thr-530. Another report found evidence of autophosphorylation at Ser-154, Thr-186, Thr-218, Ser-267 and Thr-530, as well as a number of other minor sites, but determined that phosphorylation at these sites is not required for enzyme activity and may not occur in vivo.

The protein resides in the mitochondrion outer membrane. Its subcellular location is the mitochondrion inner membrane. It localises to the cytoplasm. It is found in the cytosol. The catalysed reaction is L-seryl-[protein] + ATP = O-phospho-L-seryl-[protein] + ADP + H(+). It catalyses the reaction L-threonyl-[protein] + ATP = O-phospho-L-threonyl-[protein] + ADP + H(+). Its function is as follows. Acts as a serine/threonine-protein kinase. Exhibits a substrate preference for proline at position P+1 and a general preference at several residues for basic residues such as arginine. Also exhibits moderate preferences for a phosphotyrosine at position P-3 and a tryptophan at P-5. Critical to mitochondrial homeostasis it mediates several pathways that maintain mitochondrial health and function. Protects against mitochondrial dysfunction during cellular stress by phosphorylating mitochondrial proteins such as park and likely Drp1, to coordinate mitochondrial quality control mechanisms that remove and replace dysfunctional mitochondrial components. Depending on the severity of mitochondrial damage and/or dysfunction, activity ranges from preventing apoptosis and stimulating mitochondrial biogenesis to regulating mitochondrial dynamics and eliminating severely damaged mitochondria via mitophagy. Appears to be particularly important in maintaining the physiology and function of cells with high energy demands that are undergoing stress or altered metabolic environment, including spermatids, muscle cells and neurons such as the dopaminergic (DA) neurons. Mediates the translocation and activation of park at the outer membrane (OMM) of dysfunctional/depolarized mitochondria. At the OMM of damaged mitochondria, phosphorylates pre-existing polyubiquitin chains, the Pink1-phosphorylated polyubiquitin then recruits park from the cytosol to the OMM where park is fully activated by phosphorylation at 'Ser-80' by Pink1. When cellular stress results in irreversible mitochondrial damage, functions with park to promote the clearance of dysfunctional and/or depolarized mitochondria by selective autophagy (mitophagy). The Pink1-park pathway also promotes fission and/or inhibits fusion of damaged mitochondria, by phosphorylating and thus promoting the park-dependent degradation of proteins involved in mitochondrial fusion/fission such as Marf, Opa1 and fzo. This prevents the refusion of unhealthy mitochondria with the mitochondrial network or initiates mitochondrial fragmentation facilitating their later engulfment by autophagosomes. Also likely to promote mitochondrial fission independently of park and Atg7-mediated mitophagy, via the phosphorylation and activation of Drp1. Regulates motility of damaged mitochondria by phosphorylating Miro which likely promotes its park-dependent degradation by the proteasome; in motor neurons, this inhibits mitochondrial intracellular anterograde transport along the axons which probably increases the chance of the mitochondria being eliminated in the soma. The Pink1-park pathway is also involved in mitochondrial regeneration processes such as promoting mitochondrial biogenesis, activating localized mitochondrial repair, promoting selective turnover of mitochondrial proteins and initiating the mitochondrial import of endogenous proteins. Involved in mitochondrial biogenesis by promoting the park-dependent ubiquitination of transcriptional repressor Paris which leads to its subsequent proteasomal degradation and allows activation of the transcription factor srl. Functions with park to promote localized mitochondrial repair by activating the translation of specific nuclear-encoded mitochondrial RNAs (nc-mtRNAs) on the mitochondrial surface, including several key electron transport chain component nc-mtRNAs. During oogenesis, phosphorylates and inactivates larp on the membrane of defective mitochondria, thus impairing local translation and mtDNA replication and consequently, reducing transmission of deleterious mtDNA mutations to the mature oocyte. Phosphorylates the mitochondrial acyl-CoA dehydrogenase Mcad, and appears to be important for maintaining fatty acid and amino acid metabolism via a mechanism that is independent of it's role in maintaining production of ATP. This Tribolium castaneum (Red flour beetle) protein is Serine/threonine-protein kinase Pink1, mitochondrial.